Reading from the N-terminus, the 356-residue chain is Histidinol-phosphate aminotransferase (356 aa).

K214 carries the N6-(pyridoxal phosphate)lysine modification.

The protein belongs to the class-II pyridoxal-phosphate-dependent aminotransferase family. Histidinol-phosphate aminotransferase subfamily. In terms of assembly, homodimer. Pyridoxal 5'-phosphate serves as cofactor.

It catalyses the reaction L-histidinol phosphate + 2-oxoglutarate = 3-(imidazol-4-yl)-2-oxopropyl phosphate + L-glutamate. The protein operates within amino-acid biosynthesis; L-histidine biosynthesis; L-histidine from 5-phospho-alpha-D-ribose 1-diphosphate: step 7/9. The sequence is that of Histidinol-phosphate aminotransferase from Escherichia coli O1:K1 / APEC.